The sequence spans 180 residues: UPF0340 protein RBAM_034070 (180 aa).

This sequence belongs to the UPF0340 family.

This chain is UPF0340 protein RBAM_034070, found in Bacillus velezensis (strain DSM 23117 / BGSC 10A6 / LMG 26770 / FZB42) (Bacillus amyloliquefaciens subsp. plantarum).